Reading from the N-terminus, the 428-residue chain is F-box/LRR-repeat protein 3 (428 aa).

Basic and acidic residues predominate over residues 1-21 (MKRGGRDSDRNSSEEGTAEKS). Positions 1–27 (MKRGGRDSDRNSSEEGTAEKSKKLRTT) are disordered. Positions 34–81 (CDWGNLLQDIILQVFKYLPLLDRAHASQVCRNWNQVFHMPDLWRCFEF) constitute an F-box domain. 7 LRR repeats span residues 119–146 (SSKESAEAACDILSQLVNCSLKTLGLIS), 181–207 (DTPVDDPSLKVLVANNSDTLKLLKMSS), 208–233 (CPHVSPAGILCVADQCHGLRELALNY), 234–259 (HLLSDELLLALSSEKHVRLEHLRIDV), 316–341 (GRSVSKDVLGRVGMTCPRLVELVVCA), 343–368 (GLRPLDEELIRIAERCKNLSAIGLGE), and 369–394 (CEVSCSAFVEFVKMCGGRLSQLSIME).

Part of the SCF (SKP1-CUL1-F-box) E3 ubiquitin-protein ligase complex SCF(FBXL3) composed of CUL1, SKP1, RBX1 and FBXL3. Interacts with CRY1 and CRY2 (phosphorylated). Interacts with HDAC3. Interacts with KDM8. Undergoes autophagy-mediated degradation in the liver in a time-dependent manner. As to expression, widely expressed.

It localises to the nucleus. The protein localises to the cytoplasm. It participates in protein modification; protein ubiquitination. In terms of biological role, substrate-recognition component of the SCF(FBXL3) E3 ubiquitin ligase complex involved in circadian rhythm function. Plays a key role in the maintenance of both the speed and the robustness of the circadian clock oscillation. The SCF(FBXL3) complex mainly acts in the nucleus and mediates ubiquitination and subsequent degradation of CRY1 and CRY2. Activity of the SCF(FBXL3) complex is counteracted by the SCF(FBXL21) complex. The sequence is that of F-box/LRR-repeat protein 3 (FBXL3) from Homo sapiens (Human).